A 379-amino-acid polypeptide reads, in one-letter code: MSDFLPFSRPAMGAEELAAVKTVLDSGWITTGPKNQELEAAFCRLTGNQYAVAVSSATAGMHIALMALGIGEGDEVITPSMTWVSTLNMIVLLGANPVMVDVDRDTLMVTPEHIEAAITPQTKAIIPVHYAGAPADLDAIYALGERYGIPVIEDAAHATGTSYKGLHIGARGTAIFSFHAIKNITCAEGGIVVTDNPQFADKLRSLKFHGLGVDAWDRQSGGRAPQAEVLAPGYKYNLPDLNAAIALAQLQKLDALNARRAAIAAQYHQAMADLPFQPLSLPSWEHIHAWHLFIIRVDEARCGITRDALMASLKTKGIGTGLHFRAAHTQKYYRERFPTLTLPDTEWNSERICSLPLFPDMTESDFDRVITALHQIAGQ.

Lys182 carries the post-translational modification N6-(pyridoxal phosphate)lysine.

This sequence belongs to the DegT/DnrJ/EryC1 family. ArnB subfamily. As to quaternary structure, homodimer. Pyridoxal 5'-phosphate is required as a cofactor.

The enzyme catalyses UDP-4-amino-4-deoxy-beta-L-arabinose + 2-oxoglutarate = UDP-beta-L-threo-pentopyranos-4-ulose + L-glutamate. It functions in the pathway nucleotide-sugar biosynthesis; UDP-4-deoxy-4-formamido-beta-L-arabinose biosynthesis; UDP-4-deoxy-4-formamido-beta-L-arabinose from UDP-alpha-D-glucuronate: step 2/3. The protein operates within bacterial outer membrane biogenesis; lipopolysaccharide biosynthesis. Functionally, catalyzes the conversion of UDP-4-keto-arabinose (UDP-Ara4O) to UDP-4-amino-4-deoxy-L-arabinose (UDP-L-Ara4N). The modified arabinose is attached to lipid A and is required for resistance to polymyxin and cationic antimicrobial peptides. This Salmonella choleraesuis (strain SC-B67) protein is UDP-4-amino-4-deoxy-L-arabinose--oxoglutarate aminotransferase.